Reading from the N-terminus, the 244-residue chain is PF03932 family protein CutC (244 aa).

The protein belongs to the CutC family.

Its subcellular location is the cytoplasm. The protein is PF03932 family protein CutC of Pasteurella multocida (strain Pm70).